A 371-amino-acid chain; its full sequence is MNKLPHETRVVIGMSGGVDSSVAALLLKEQGYDVIGIFMKNWDDTDENGVCTATEDYNDVIEVCNQIGIPYYAVNFEKQYWDKVFTYFLDEYRAGRTPNPDVMCNKEIKFKAFLEHAMALGADYVATGHYARVAYMDGEYKMLRGVDDNKDQTYFLNQLGQEQLSKTMFPLGELKKPQIREMAKEAGLATATKKDSTGICFIGERNFKDFLSNYLPAQPGVMQTLSGEVKGKHDGLMYYTIGQRHGLGIGGNGDPWFVVGKNLKENILYVDQGFHNELLYGDEVIATNVNWVSDRAKEKEFKCTAKFRYRQEDNGVTVQIVDENTIRILCDEPIRAITPGQAVVFYDGDECLGGATIDEVYRSGEQLDYLG.

Residues 13–20 and Met39 each bind ATP; that span reads GMSGGVDS. The segment at 99–101 is interaction with target base in tRNA; that stretch reads NPD. The active-site Nucleophile is Cys104. Cysteines 104 and 200 form a disulfide. Gly128 contributes to the ATP binding site. Positions 150-152 are interaction with tRNA; that stretch reads KDQ. Cys200 acts as the Cysteine persulfide intermediate in catalysis. Positions 308-309 are interaction with tRNA; the sequence is RY.

This sequence belongs to the MnmA/TRMU family.

The protein localises to the cytoplasm. It catalyses the reaction S-sulfanyl-L-cysteinyl-[protein] + uridine(34) in tRNA + AH2 + ATP = 2-thiouridine(34) in tRNA + L-cysteinyl-[protein] + A + AMP + diphosphate + H(+). Functionally, catalyzes the 2-thiolation of uridine at the wobble position (U34) of tRNA, leading to the formation of s(2)U34. In Bacillus cytotoxicus (strain DSM 22905 / CIP 110041 / 391-98 / NVH 391-98), this protein is tRNA-specific 2-thiouridylase MnmA.